Here is a 133-residue protein sequence, read N- to C-terminus: Small ribosomal subunit protein uS8c (133 aa).

It belongs to the universal ribosomal protein uS8 family. In terms of assembly, part of the 30S ribosomal subunit.

The protein localises to the plastid. Its subcellular location is the chloroplast. In terms of biological role, one of the primary rRNA binding proteins, it binds directly to 16S rRNA central domain where it helps coordinate assembly of the platform of the 30S subunit. The protein is Small ribosomal subunit protein uS8c (rps8) of Cyanidium caldarium (Red alga).